The following is a 324-amino-acid chain: MKPSIILYKTLPDDLLHRLEAHFTVTQVPNLHPETVARHAQAFASAQGLLGASETVNRALLEKMPALRAASTISVGYDNVEVDALTARKIVLMHTPAVLTETVADTVMALMLATARRVVDVAERVKAGEWTESIGPAWFGVDVHHKTLGIVGMGRIGMALAQRAHFGFTMPVLYHARRRHQEAEDRFNARYCDLDTLLQEADFVCVILPLTAETRHLFGATQFARMKSSAIFINAGRGPVADENALIAALQNGEIYAAGLDVFEQEPLSVDSPLLNMSNVVAVPHIGSATHETRYNMMACAVDNLIDALQGKIEKNCVNPQAAG.

Residues arginine 237 and glutamate 266 contribute to the active site. Histidine 285 acts as the Proton donor in catalysis.

Belongs to the D-isomer specific 2-hydroxyacid dehydrogenase family. GhrB subfamily. As to quaternary structure, homodimer.

It is found in the cytoplasm. The catalysed reaction is glycolate + NADP(+) = glyoxylate + NADPH + H(+). It carries out the reaction (R)-glycerate + NAD(+) = 3-hydroxypyruvate + NADH + H(+). The enzyme catalyses (R)-glycerate + NADP(+) = 3-hydroxypyruvate + NADPH + H(+). Catalyzes the NADPH-dependent reduction of glyoxylate and hydroxypyruvate into glycolate and glycerate, respectively. The protein is Glyoxylate/hydroxypyruvate reductase B of Salmonella gallinarum (strain 287/91 / NCTC 13346).